The primary structure comprises 283 residues: Orotidine 5'-phosphate decarboxylase (283 aa).

Lysine 97 functions as the Proton donor in the catalytic mechanism.

Belongs to the OMP decarboxylase family. Type 2 subfamily.

The enzyme catalyses orotidine 5'-phosphate + H(+) = UMP + CO2. It participates in pyrimidine metabolism; UMP biosynthesis via de novo pathway; UMP from orotate: step 2/2. This is Orotidine 5'-phosphate decarboxylase from Clostridium botulinum (strain Kyoto / Type A2).